A 301-amino-acid chain; its full sequence is Recombination-associated protein RdgC (301 aa).

It belongs to the RdgC family.

The protein resides in the cytoplasm. The protein localises to the nucleoid. Functionally, may be involved in recombination. This is Recombination-associated protein RdgC from Pseudoalteromonas atlantica (strain T6c / ATCC BAA-1087).